Consider the following 445-residue polypeptide: NADH-quinone oxidoreductase subunit F (445 aa).

NAD(+) is bound at residue 61–70 (GRGGAGFSTG). 174–221 (GAGRYICGEETALINSLEGRRANPRSKPPFPATSGVWGKPTCVNNVET) provides a ligand contact to FMN. 4 residues coordinate [4Fe-4S] cluster: Cys351, Cys354, Cys357, and Cys398.

The protein belongs to the complex I 51 kDa subunit family. Composed of 13 different subunits. Subunits NuoCD, E, F, and G constitute the peripheral sector of the complex. FMN serves as cofactor. It depends on [4Fe-4S] cluster as a cofactor.

The enzyme catalyses a quinone + NADH + 5 H(+)(in) = a quinol + NAD(+) + 4 H(+)(out). Its function is as follows. NDH-1 shuttles electrons from NADH, via FMN and iron-sulfur (Fe-S) centers, to quinones in the respiratory chain. The immediate electron acceptor for the enzyme in this species is believed to be ubiquinone. Couples the redox reaction to proton translocation (for every two electrons transferred, four hydrogen ions are translocated across the cytoplasmic membrane), and thus conserves the redox energy in a proton gradient. The polypeptide is NADH-quinone oxidoreductase subunit F (nuoF) (Salmonella typhimurium (strain LT2 / SGSC1412 / ATCC 700720)).